We begin with the raw amino-acid sequence, 373 residues long: tRNA pseudouridine synthase Pus10 (373 aa).

The Nucleophile role is filled by Asp-197. 2 residues coordinate substrate: Tyr-265 and Tyr-336.

It belongs to the pseudouridine synthase Pus10 family.

It carries out the reaction uridine(54) in tRNA = pseudouridine(54) in tRNA. The enzyme catalyses uridine(55) in tRNA = pseudouridine(55) in tRNA. In terms of biological role, responsible for synthesis of pseudouridine from uracil-54 and uracil-55 in the psi GC loop of transfer RNAs. This chain is tRNA pseudouridine synthase Pus10, found in Korarchaeum cryptofilum (strain OPF8).